Here is a 122-residue protein sequence, read N- to C-terminus: Holo-[acyl-carrier-protein] synthase (122 aa).

Mg(2+) is bound by residues aspartate 8 and glutamate 58.

The protein belongs to the P-Pant transferase superfamily. AcpS family. Mg(2+) is required as a cofactor.

The protein resides in the cytoplasm. The enzyme catalyses apo-[ACP] + CoA = holo-[ACP] + adenosine 3',5'-bisphosphate + H(+). Its function is as follows. Transfers the 4'-phosphopantetheine moiety from coenzyme A to a Ser of acyl-carrier-protein. The sequence is that of Holo-[acyl-carrier-protein] synthase from Levilactobacillus brevis (strain ATCC 367 / BCRC 12310 / CIP 105137 / JCM 1170 / LMG 11437 / NCIMB 947 / NCTC 947) (Lactobacillus brevis).